The following is a 625-amino-acid chain: Chaperone protein HtpG (625 aa).

The interval 1-339 is a; substrate-binding; that stretch reads MNKQTLSFQA…SSDLPLNVSR (339 aa). The segment at 340–557 is b; sequence ELLQESRDVK…DGDISGHLAR (218 aa). A c region spans residues 558-625; that stretch reads LLKQAGQSAP…YVQRVNRLLV (68 aa).

The protein belongs to the heat shock protein 90 family. In terms of assembly, homodimer.

The protein localises to the cytoplasm. In terms of biological role, molecular chaperone. Has ATPase activity. The chain is Chaperone protein HtpG from Methylibium petroleiphilum (strain ATCC BAA-1232 / LMG 22953 / PM1).